The primary structure comprises 814 residues: Telomere repeats-binding bouquet formation protein 1 (814 aa).

ARM repeat units lie at residues 93–136 (EMFR…KTSR) and 327–368 (GGLP…GMST). Disordered regions lie at residues 461–521 (DQDS…ELKR), 551–584 (STPT…LSDD), and 653–753 (FRRS…KRQN). Residues 488-512 (EKSKKRKHKQKRENERSDNQETRRE) are a coiled coil. Composition is skewed to basic and acidic residues over residues 499-521 (RENE…ELKR), 565-577 (IFRH…RNQR), and 679-688 (EHSTSAQEHK). The span at 689–699 (QKSKREKHKLS) shows a compositional bias: basic residues. The span at 714–741 (RPRETYSPDVKQWTDHRHLKKSSEDARS) shows a compositional bias: basic and acidic residues. The region spanning 746–799 (GRHRKRQNWSDKELCYLTKGVKRFGHSWNTILWKYPFHPGRTNVDLAKKFYHMQ) is the Myb-like domain.

Belongs to the TERB1 family. As to quaternary structure, component of the MAJIN-TERB1-TERB2 complex.

The protein localises to the chromosome. Its subcellular location is the telomere. It is found in the nucleus inner membrane. Functionally, meiosis-specific telomere-associated protein involved in meiotic telomere attachment to the nucleus inner membrane, a crucial step for homologous pairing and synapsis. Component of the MAJIN-TERB1-TERB2 complex, which promotes telomere cap exchange by mediating attachment of telomeric DNA to the inner nuclear membrane and replacement of the protective cap of telomeric chromosomes: in early meiosis, the MAJIN-TERB1-TERB2 complex associates with telomeric DNA and the shelterin/telosome complex. During prophase, the complex matures and promotes release of the shelterin/telosome complex from telomeric DNA. In the MAJIN-TERB1-TERB2 complex, TERB1 probably mediates association with the shelterin/telosome complex. The polypeptide is Telomere repeats-binding bouquet formation protein 1 (ccdc79) (Danio rerio (Zebrafish)).